Here is a 346-residue protein sequence, read N- to C-terminus: Protein STAR1 (346 aa).

The interval 23 to 48 (QRPPPNGTVHACSKSRPPQLEPGKVG) is disordered. The ABC transporter domain occupies 112-344 (IRVRGLTRRS…KHPMARRFLE (233 aa)). 146–153 (GPSGSGKS) serves as a coordination point for ATP.

This sequence belongs to the ABC transporter superfamily. ABCI family. Interacts with STAR2. In terms of tissue distribution, expressed in roots.

The protein localises to the membrane. Functionally, associates with STAR2 to form a functional transmembrane ABC transporter required for detoxification of aluminum (Al) in roots. Can specifically transport UDP-glucose. The sequence is that of Protein STAR1 from Oryza sativa subsp. japonica (Rice).